Here is a 141-residue protein sequence, read N- to C-terminus: Protein MGF 100-2L (141 aa).

This sequence belongs to the asfivirus MGF 100 family.

Plays a role in virus cell tropism, and may be required for efficient virus replication in macrophages. The chain is Protein MGF 100-2L from African swine fever virus (isolate Pig/Kenya/KEN-50/1950) (ASFV).